The following is a 545-amino-acid chain: Chaperonin GroEL 3 (545 aa).

Residues 29-32 (TLGP), 86-90 (DGTTT), glycine 413, 479-481 (DAV), and aspartate 495 contribute to the ATP site. The tract at residues 526 to 545 (DKQAKAPAGVGPGPGEGFDY) is disordered. The span at 535–545 (VGPGPGEGFDY) shows a compositional bias: gly residues.

Belongs to the chaperonin (HSP60) family. As to quaternary structure, forms a cylinder of 14 subunits composed of two heptameric rings stacked back-to-back. Interacts with the co-chaperonin GroES.

It localises to the cytoplasm. It catalyses the reaction ATP + H2O + a folded polypeptide = ADP + phosphate + an unfolded polypeptide.. Functionally, together with its co-chaperonin GroES, plays an essential role in assisting protein folding. The GroEL-GroES system forms a nano-cage that allows encapsulation of the non-native substrate proteins and provides a physical environment optimized to promote and accelerate protein folding. The chain is Chaperonin GroEL 3 from Trichormus variabilis (strain ATCC 29413 / PCC 7937) (Anabaena variabilis).